Reading from the N-terminus, the 430-residue chain is MSSVVVVGTQWGDEGKGKITDFLSKKADVVARYQGGDNAGHTIVFNNETYKLHLIPSGIFYSDKKCVIGNGLVVNPKSLVKELKYLHDRGVSTDNLLISNRAHVILPYHQLQDQLEEEAKGDAKVGTTLKGIGPCYMDKAARIGIRMADLLDKETFAEKLKIVLEQKNRMFTKMYDAEAIAFDDIFEEYYAYGQEFAKYVCDTSVVVNDSLDKGEKVLFEGAQGVLLDLDHGTYPFVTSSNASAGGVASGVGVGPARIDHVVGVCKAYTSRVGDGPFPTELFDEIGHQIREVGREYGTTTGRPRRVGWFDSVVVRHSRRTSGLTDLSLNSIDVLTGIETLKICTSYEFNGKQIDEYPASFRDLEACVPVYEELPGWKEDITHIRKFEDLPINAQNYVKRIADLTGISLVTFSVGPGREQTVVLRDLYEEA.

GTP-binding positions include 12–18 (GDEGKGK) and 40–42 (GHT). D13 serves as the catalytic Proton acceptor. Mg(2+) is bound by residues D13 and G40. Residues 13–16 (DEGK), 38–41 (NAGH), T128, R142, Q223, T238, and R302 contribute to the IMP site. Residue H41 is the Proton donor of the active site. 298–304 (TTTGRPR) is a binding site for substrate. GTP-binding positions include R304, 330-332 (SID), and 412-414 (SVG).

It belongs to the adenylosuccinate synthetase family. As to quaternary structure, homodimer. The cofactor is Mg(2+).

Its subcellular location is the cytoplasm. The catalysed reaction is IMP + L-aspartate + GTP = N(6)-(1,2-dicarboxyethyl)-AMP + GDP + phosphate + 2 H(+). It functions in the pathway purine metabolism; AMP biosynthesis via de novo pathway; AMP from IMP: step 1/2. Functionally, plays an important role in the de novo pathway of purine nucleotide biosynthesis. Catalyzes the first committed step in the biosynthesis of AMP from IMP. The polypeptide is Adenylosuccinate synthetase (Exiguobacterium sibiricum (strain DSM 17290 / CCUG 55495 / CIP 109462 / JCM 13490 / 255-15)).